Here is a 1748-residue protein sequence, read N- to C-terminus: MNVMGFNTDRLAWTRNKLRGFYFAKLYYEAKEYDLAKKYVCTYLSVQERDPRAHRFLGLLYELEENTEKAVECYRRSLELNPPQKDLVLKIAELLCKNDVTDGRAKYWVERAAKLFPGSPAIYKLKEHLLDCEGEDGWNKLFDWIQSELYVRPDDVHMNIRLVELYRSNKRLKDAVARCHEAERNIALRSSLEWNSCVVQTLKEYLESLQCLESDKSDWRATNTDLLLAYANLMLLTLSTRDVQESRELLESFDSALQSAKSSLGGNDELSATFLEMKGHFYMHAGSLLLKMGQHGNNVQWQALSELAALCYVIAFQVPRPKIKLIKGEAGQNLLEMMACDRLSQSGHMLLNLSRGKQDFLKEVVETFANKSGQSVLYNALFSSQSSKDTSFLGSDDIGNIDVQEPELEDLARYDVGAIQAHNGSLQHLTWLGLQWNSLPALPGIRKWLKQLFHHLPQETSRLETNAPESICILDLEVFLLGVVYTSHLQLKEKCNSHHSSYQPLCLPLPVCKRLCTERQKSWWDAVCTLIHRKAVPGNSAELRLVVQHEINTLRAQEKHGLQPALLVHWAKCLQKMGRGLNSSYDQQEYIGRSVHYWKKVLPLLKIIKKNSIPEPIDPLFKHFHSVDIQASEIVEYEEDAHITFAILDAVHGNIEDAVTAFESIKSVVSYWNLALIFHRKAEDIENDAVFPEEQEECKNYLRKTRDYLIKIIDDSDSNLSVVKKLPVPLESVKEMLKSVMQELEDYSEGGPLYKNGSLRNADSEIKHSTPSPTKYSLSPSKSYKYSPKTPPRWAEDQNSLRKMICQEVKAITKLNSSKSASRHRWPTENYGPDSVPDGYQGSQTFHGAPLTVATTGPSVYYSQSPAYNSQYLLRPAANVTPTKGSSNTEFKSTKEGFSIAVSADGFKFGISEPGNQEKKSEKPLENDTGFQAQDISGQKNGRGVIFGQTSSTFTFADVAKSTSGEGFQFGKKDPNFKGFSGAGEKLFSSQCGKMANKANTSGDFEKDDDACKTEDSDDIHFEPVVQMPEKVELVTGEEGEKVLYSQGVKLFRFDAEISQWKERGLGNLKILKNEVNGKPRMLMRRDQVLKVCANHWITTTMNLKPLSGSDRAWMWLASDFSDGDAKLERLAAQFKTPELAEEFKQKFEECQRLLLDIPLQTPHKLVDTGRAAKLIQRAEEMKSGLKDFKTFLTNDQTKVTEEENKGSGTGAAGASDTTIKPNPENTGPTLEWDNYDLREDALDDNVSSSSVHDSPLASSPVRKNIFRFDESTTGFNFSFKSALSLSKSPAKLNQSGTSVGTDEESDVTQEEERDGQYFEPVVPLPDLVEVSSGEENEQVVFSHRAELYRYDKDVGQWKERGIGDIKILQNYDNKQVRIVMRRDQVLKLCANHRITPDMSLQNMKGTERVWVWTACDFADGERKVEHLAVRFKLQDVADSFKKIFDEAKTAQEKDSLITPHVSRSSTPRESPCGKIAVAVLEETTRERTDVIQGDDVADAASEVEVSSTSETTTKAVVSPPKFVFGSESVKRIFSSEKSNPFAFGNSSATGSLFGFSFNAPLKSNDSETSSVAQSGSESKVEPKKCELSKNSDIEQSSDSKVKNLSASFPMEESSINYTFKTPEKEPPLWHAEFTKEELVQKLSSTTKSADQLNGLLRETEATSAVLMEQIKLLKSEIRRLERNQEESAANVEHLKNVLLQFIFLKPGSERESLLPVINTMLQLSPEEKGKLAAVAQGLQETSIPKKK.

Threonine 14 carries the phosphothreonine modification. TPR repeat units follow at residues 51–84 (PRAH…NPPQ), 575–608 (QKMG…LKII), and 639–672 (EDAH…VSYW). Positions 751 to 796 (GPLYKNGSLRNADSEIKHSTPSPTKYSLSPSKSYKYSPKTPPRWAE) are disordered. Low complexity predominate over residues 769–788 (STPSPTKYSLSPSKSYKYSP). The 137-residue stretch at 1021 to 1157 (HFEPVVQMPE…FEECQRLLLD (137 aa)) folds into the RanBD1 1 domain. 2 disordered regions span residues 1198-1233 (TKVT…TLEW) and 1291-1316 (AKLN…ERDG). Residues 1220–1229 (IKPNPENTGP) are compositionally biased toward polar residues. Residues 1302 to 1314 (TDEESDVTQEEER) show a composition bias toward acidic residues. One can recognise a RanBD1 2 domain in the interval 1318 to 1454 (YFEPVVPLPD…FDEAKTAQEK (137 aa)). Over residues 1565–1578 (NDSETSSVAQSGSE) the composition is skewed to polar residues. The disordered stretch occupies residues 1565–1606 (NDSETSSVAQSGSESKVEPKKCELSKNSDIEQSSDSKVKNLS). Residues 1579–1602 (SKVEPKKCELSKNSDIEQSSDSKV) show a composition bias toward basic and acidic residues. The GRIP domain maps to 1685–1735 (QEESAANVEHLKNVLLQFIFLKPGSERESLLPVINTMLQLSPEEKGKLAAV).

The chain is RANBP2-like and GRIP domain-containing protein 1 (RGPD1) from Homo sapiens (Human).